Reading from the N-terminus, the 368-residue chain is Glycoprotein UL18 (368 aa).

The N-terminal stretch at 1-18 (MMTMWCLTLFVLWMLRVV) is a signal peptide. Residues 19-114 (GMHVLRYGYT…EIALGYRSQS (96 aa)) are alpha-1-like. Residues Asn-56, Asn-66, Asn-74, Asn-95, Asn-123, Asn-127, Asn-150, Asn-167, Asn-177, Asn-193, Asn-240, Asn-282, and Asn-291 are each glycosylated (N-linked (GlcNAc...) asparagine; by host). The alpha-2-like stretch occupies residues 115-208 (VLTWTHECNT…VIYSGFQPPV (94 aa)). The interval 209-303 (THPVVKGGVR…VEIPISVTSP (95 aa)) is alpha-3-like. The chain crosses the membrane as a helical span at residues 321 to 342 (YNTMTISSVLLALLLCALLFAF).

As to quaternary structure, interacts with host LILRB1.

It localises to the host membrane. Its function is as follows. Plays a role in the protection against host NK cell cytotoxicity by interacting with and modulating the activity of the host inhibitory leukocyte Ig-like receptor 1/LILRB1, which is expressed on monocytes, dendritic cells, as well as subsets of T and NK cells. UL18 exerts an inhibitory effect on LIR-1+ NK cells, while it stimulates LIR-1- NK cell. These modulations prevent lysis of the infected cells by NK cells. The protein is Glycoprotein UL18 (H301) of Homo sapiens (Human).